Consider the following 316-residue polypeptide: Transcription initiation factor IIB (316 aa).

Residues 7 to 38 form a TFIIB-type zinc finger; sequence FRLRCPVCGSTDIVFNEETGEYVCARCGTIVL. Zn(2+)-binding residues include cysteine 11, cysteine 14, cysteine 30, and cysteine 33. The segment at 51-73 is disordered; the sequence is FTPEERERRGRTGAPLSPTLHDH. 2 tandem repeats follow at residues 124–207 and 218–299.

It belongs to the TFIIB family.

Stabilizes TBP binding to an archaeal box-A promoter. Also responsible for recruiting RNA polymerase II to the pre-initiation complex (DNA-TBP-TFIIB). The protein is Transcription initiation factor IIB of Ignicoccus hospitalis (strain KIN4/I / DSM 18386 / JCM 14125).